A 195-amino-acid chain; its full sequence is Pyruvoyl-dependent arginine decarboxylase AaxB (195 aa).

S53 is modified (pyruvic acid (Ser)).

The protein belongs to the pyruvoyl-dependent arginine decarboxylase family. As to quaternary structure, trimer of an alpha-beta dimer. Pyruvate is required as a cofactor.

It localises to the cytoplasm. It carries out the reaction L-arginine + H(+) = agmatine + CO2. In terms of biological role, part of the AaxABC system, catalyzes the decarboxylation of L-arginine. The arginine uptake by the bacterium in the macrophage may be a virulence factor against the host innate immune response. The sequence is that of Pyruvoyl-dependent arginine decarboxylase AaxB (aaxB) from Chlamydia trachomatis serovar L2 (strain ATCC VR-902B / DSM 19102 / 434/Bu).